The sequence spans 241 residues: Phosphoadenosine 5'-phosphosulfate reductase (241 aa).

The disordered stretch occupies residues 221–241; the sequence is GADPRSGRWRGKAKTECGLHA. C237 functions as the Nucleophile; cysteine thiosulfonate intermediate in the catalytic mechanism.

Belongs to the PAPS reductase family. CysH subfamily.

The protein resides in the cytoplasm. The enzyme catalyses [thioredoxin]-disulfide + sulfite + adenosine 3',5'-bisphosphate + 2 H(+) = [thioredoxin]-dithiol + 3'-phosphoadenylyl sulfate. It functions in the pathway sulfur metabolism; hydrogen sulfide biosynthesis; sulfite from sulfate: step 3/3. Catalyzes the formation of sulfite from phosphoadenosine 5'-phosphosulfate (PAPS) using thioredoxin as an electron donor. This is Phosphoadenosine 5'-phosphosulfate reductase from Gloeobacter violaceus (strain ATCC 29082 / PCC 7421).